The chain runs to 965 residues: Glycine dehydrogenase (decarboxylating) (965 aa).

N6-(pyridoxal phosphate)lysine is present on K711.

It belongs to the GcvP family. As to quaternary structure, the glycine cleavage system is composed of four proteins: P, T, L and H. The cofactor is pyridoxal 5'-phosphate.

The enzyme catalyses N(6)-[(R)-lipoyl]-L-lysyl-[glycine-cleavage complex H protein] + glycine + H(+) = N(6)-[(R)-S(8)-aminomethyldihydrolipoyl]-L-lysyl-[glycine-cleavage complex H protein] + CO2. In terms of biological role, the glycine cleavage system catalyzes the degradation of glycine. The P protein binds the alpha-amino group of glycine through its pyridoxal phosphate cofactor; CO(2) is released and the remaining methylamine moiety is then transferred to the lipoamide cofactor of the H protein. This Psychrobacter arcticus (strain DSM 17307 / VKM B-2377 / 273-4) protein is Glycine dehydrogenase (decarboxylating).